A 311-amino-acid polypeptide reads, in one-letter code: Phosphopantothenate--cysteine ligase (311 aa).

At Ala2 the chain carries N-acetylalanine.

This sequence belongs to the PPC synthetase family. Homodimer.

It carries out the reaction (R)-4'-phosphopantothenate + L-cysteine + ATP = N-[(R)-4-phosphopantothenoyl]-L-cysteine + AMP + diphosphate + H(+). The catalysed reaction is (R)-4'-phosphopantothenate + L-cysteine + CTP = N-[(R)-4-phosphopantothenoyl]-L-cysteine + CMP + diphosphate + H(+). The protein operates within cofactor biosynthesis; coenzyme A biosynthesis; CoA from (R)-pantothenate: step 2/5. Catalyzes the second step in the biosynthesis of coenzyme A from vitamin B5, where cysteine is conjugated to 4'-phosphopantothenate to form 4-phosphopantothenoylcysteine. Has a preference for ATP over CTP as a cosubstrate. The protein is Phosphopantothenate--cysteine ligase (PPCS) of Homo sapiens (Human).